A 639-amino-acid chain; its full sequence is DNA gyrase subunit B (639 aa).

Basic and acidic residues predominate over residues 392-402 (QAEELTRRKSA). Residues 392–416 (QAEELTRRKSALESTSLPGKLADCQ) form a disordered region. A Toprim domain is found at 423-537 (SELFIVEGDS…AGYVYAAQPP (115 aa)). E429, D502, and D504 together coordinate Mg(2+). Residue K624 forms a Glycyl lysine isopeptide (Lys-Gly) (interchain with G-Cter in SAMP2) linkage.

The protein belongs to the type II topoisomerase GyrB family. Heterotetramer, composed of two GyrA and two GyrB chains. In the heterotetramer, GyrA contains the active site tyrosine that forms a transient covalent intermediate with DNA, while GyrB binds cofactors and catalyzes ATP hydrolysis. The cofactor is Mg(2+). It depends on Mn(2+) as a cofactor. Ca(2+) is required as a cofactor.

The protein localises to the cytoplasm. The catalysed reaction is ATP-dependent breakage, passage and rejoining of double-stranded DNA.. In terms of biological role, a type II topoisomerase that negatively supercoils closed circular double-stranded (ds) DNA in an ATP-dependent manner to modulate DNA topology and maintain chromosomes in an underwound state. Negative supercoiling favors strand separation, and DNA replication, transcription, recombination and repair, all of which involve strand separation. Also able to catalyze the interconversion of other topological isomers of dsDNA rings, including catenanes and knotted rings. Type II topoisomerases break and join 2 DNA strands simultaneously in an ATP-dependent manner. The chain is DNA gyrase subunit B from Haloferax volcanii (strain ATCC 29605 / DSM 3757 / JCM 8879 / NBRC 14742 / NCIMB 2012 / VKM B-1768 / DS2) (Halobacterium volcanii).